Reading from the N-terminus, the 120-residue chain is Secreted effector PIT2 (120 aa).

Residues 1–25 (MLFRSAFVLLIVAFASACLVQHVQA) form the signal peptide. Residues 46 to 59 (KLNRRWWFGFTGSL) are PID14 protease inhibitor domain.

Interacts with host cysteine proteases CP1A, CP1B, XCP2 and CP2. Post-translationally, cleaved by host target papain-like cysteine proteases (PLCPs) to release the embedded inhibitor peptide PID14.

It localises to the secreted. Secreted effector required for virulence. Functions as an inhibitor of a set of apoplastic maize papain-like cysteine proteases (PLCPs) including CP1A, CP1B, XCP2 and CP2, whose activity is directly linked with salicylic-acid-associated plant defenses. Acts as a substrate mimicking molecule for apoplastic PLCPs and its processing releases the embedded inhibitor peptide PID14, which in turn blocks PLCPs to modulate host immunity. In Mycosarcoma maydis (Corn smut fungus), this protein is Secreted effector PIT2.